The following is a 409-amino-acid chain: 2,3-bisphosphoglycerate-independent phosphoglycerate mutase 1 (409 aa).

Basic and acidic residues predominate over residues 163-173 (SDADPKVEGKP). The tract at residues 163–184 (SDADPKVEGKPPKKIKALDGSP) is disordered.

This sequence belongs to the BPG-independent phosphoglycerate mutase family. A-PGAM subfamily.

The enzyme catalyses (2R)-2-phosphoglycerate = (2R)-3-phosphoglycerate. The protein operates within carbohydrate degradation; glycolysis; pyruvate from D-glyceraldehyde 3-phosphate: step 3/5. Functionally, catalyzes the interconversion of 2-phosphoglycerate and 3-phosphoglycerate. This Methanothermobacter thermautotrophicus (strain ATCC 29096 / DSM 1053 / JCM 10044 / NBRC 100330 / Delta H) (Methanobacterium thermoautotrophicum) protein is 2,3-bisphosphoglycerate-independent phosphoglycerate mutase 1 (apgM1).